The sequence spans 278 residues: HTH-type transcriptional activator RhaS (278 aa).

The HTH araC/xylS-type domain maps to 174-272 (NLLLAWLEDH…NWSPRDIRQG (99 aa)). 2 DNA-binding regions (H-T-H motif) span residues 191–212 (DAVA…KQQT) and 239–262 (VTDI…RREF).

Binds DNA as a dimer.

It is found in the cytoplasm. Functionally, activates expression of the rhaBAD and rhaT operons. In Shigella dysenteriae serotype 1 (strain Sd197), this protein is HTH-type transcriptional activator RhaS.